The following is a 59-amino-acid chain: Large ribosomal subunit protein uL30 (59 aa).

Belongs to the universal ribosomal protein uL30 family. In terms of assembly, part of the 50S ribosomal subunit.

The protein is Large ribosomal subunit protein uL30 of Clostridium botulinum (strain ATCC 19397 / Type A).